The primary structure comprises 391 residues: Casein kinase II subunit alpha (391 aa).

The interval 36-41 (QDDYQL) is interaction with beta subunit. Positions 39 to 324 (YQLVRKLGRG…AREAMEHPYF (286 aa)) constitute a Protein kinase domain. ATP-binding positions include 45–53 (LGRGKYSEV) and Lys-68. Asp-156 (proton acceptor) is an active-site residue. Phosphothreonine; by CDK1 occurs at positions 344 and 360. Phosphoserine; by CDK1 occurs at positions 362 and 370.

The protein belongs to the protein kinase superfamily. Ser/Thr protein kinase family. CK2 subfamily. Heterotetramer composed of two catalytic subunits (alpha chain and/or alpha' chain) and two regulatory subunits (beta chains). The tetramer can exist as a combination of 2 alpha/2 beta, 2 alpha'/2 beta or 1 alpha/1 alpha'/2 beta subunits. Also part of a CK2-SPT16-SSRP1 complex composed of SSRP1, SUPT16H, CSNK2A1, CSNK2A2 and CSNK2B, which forms following UV irradiation. Interacts with RNPS1. Interacts with SNAI1. Interacts with PML. Interacts with CCAR2. Interacts with HIRIP3. In terms of processing, phosphorylated at Thr-344, Thr-360, Ser-362 and Ser-370 by CDK1 in prophase and metaphase and dephosphorylated during anaphase. Phosphorylation does not directly affect casein kinase 2 activity, but may contribute to its regulation by forming binding sites for interacting proteins and/or targeting it to different compartments.

It is found in the nucleus. The enzyme catalyses L-seryl-[protein] + ATP = O-phospho-L-seryl-[protein] + ADP + H(+). It catalyses the reaction L-threonyl-[protein] + ATP = O-phospho-L-threonyl-[protein] + ADP + H(+). Constitutively active protein kinase whose activity is not directly affected by phosphorylation. Seems to be regulated by level of expression and localization. Catalytic subunit of a constitutively active serine/threonine-protein kinase complex that phosphorylates a large number of substrates containing acidic residues C-terminal to the phosphorylated serine or threonine. Regulates numerous cellular processes, such as cell cycle progression, apoptosis and transcription, as well as viral infection. May act as a regulatory node which integrates and coordinates numerous signals leading to an appropriate cellular response. During mitosis, functions as a component of the p53/TP53-dependent spindle assembly checkpoint (SAC) that maintains cyclin-B-CDK1 activity and G2 arrest in response to spindle damage. Also required for p53/TP53-mediated apoptosis, phosphorylating 'Ser-392' of p53/TP53 following UV irradiation. Phosphorylates a number of DNA repair proteins in response to DNA damage, such as MDC1, MRE11, RAD9A, RAD51 and HTATSF1, promoting their recruitment to DNA damage sites. Can also negatively regulate apoptosis. Phosphorylates the caspases CASP9 and CASP2 and the apoptotic regulator NOL3. Phosphorylation protects CASP9 from cleavage and activation by CASP8, and inhibits the dimerization of CASP2 and activation of CASP8. Phosphorylates YY1, protecting YY1 from cleavage by CASP7 during apoptosis. Regulates transcription by direct phosphorylation of RNA polymerases I, II, III and IV. Also phosphorylates and regulates numerous transcription factors including NF-kappa-B, STAT1, CREB1, IRF1, IRF2, ATF1, ATF4, SRF, MAX, JUN, FOS, MYC and MYB. Phosphorylates Hsp90 and its co-chaperones FKBP4 and CDC37, which is essential for chaperone function. Mediates sequential phosphorylation of FNIP1, promoting its gradual interaction with Hsp90, leading to activate both kinase and non-kinase client proteins of Hsp90. Regulates Wnt signaling by phosphorylating CTNNB1 and the transcription factor LEF1. Acts as an ectokinase that phosphorylates several extracellular proteins. Phosphorylates PML at 'Ser-565' and primes it for ubiquitin-mediated degradation. Plays an important role in the circadian clock function by phosphorylating BMAL1 at 'Ser-90' which is pivotal for its interaction with CLOCK and which controls CLOCK nuclear entry. Phosphorylates FMR1, promoting FMR1-dependent formation of a membraneless compartment. May phosphorylate histone H2A on 'Ser-1'. The protein is Casein kinase II subunit alpha (Csnk2a1) of Mus musculus (Mouse).